Consider the following 143-residue polypeptide: Crossover junction endodeoxyribonuclease Hjc (143 aa).

Glutamate 11 is a binding site for Mg(2+). Serine 31 is an active-site residue. 2 residues coordinate Mg(2+): aspartate 41 and glutamate 54.

The protein belongs to the Holliday junction resolvase Hjc family. As to quaternary structure, homodimer. Mg(2+) is required as a cofactor.

The enzyme catalyses Endonucleolytic cleavage at a junction such as a reciprocal single-stranded crossover between two homologous DNA duplexes (Holliday junction).. A structure-specific endonuclease that resolves Holliday junction (HJ) intermediates during genetic recombination. Cleaves 4-way DNA junctions introducing paired nicks in opposing strands, leaving a 5'-terminal phosphate and a 3'-terminal hydroxyl group that are ligated to produce recombinant products. In terms of biological role, redundant function with Holliday junction resolvase Hje. This chain is Crossover junction endodeoxyribonuclease Hjc, found in Sulfolobus acidocaldarius (strain ATCC 33909 / DSM 639 / JCM 8929 / NBRC 15157 / NCIMB 11770).